The sequence spans 555 residues: Formate--tetrahydrofolate ligase (555 aa).

ATP is bound at residue 64–71 (TKAGIGKT).

The protein belongs to the formate--tetrahydrofolate ligase family.

It catalyses the reaction (6S)-5,6,7,8-tetrahydrofolate + formate + ATP = (6R)-10-formyltetrahydrofolate + ADP + phosphate. Its pathway is one-carbon metabolism; tetrahydrofolate interconversion. The protein is Formate--tetrahydrofolate ligase of Bacteroides fragilis (strain ATCC 25285 / DSM 2151 / CCUG 4856 / JCM 11019 / LMG 10263 / NCTC 9343 / Onslow / VPI 2553 / EN-2).